The sequence spans 312 residues: tRNA dimethylallyltransferase (312 aa).

11 to 18 (GLTATGKT) is an ATP binding site. Residue 13-18 (TATGKT) participates in substrate binding. The tract at residues 36–39 (DSMC) is interaction with substrate tRNA.

It belongs to the IPP transferase family. As to quaternary structure, monomer. It depends on Mg(2+) as a cofactor.

It catalyses the reaction adenosine(37) in tRNA + dimethylallyl diphosphate = N(6)-dimethylallyladenosine(37) in tRNA + diphosphate. Functionally, catalyzes the transfer of a dimethylallyl group onto the adenine at position 37 in tRNAs that read codons beginning with uridine, leading to the formation of N6-(dimethylallyl)adenosine (i(6)A). This Caldicellulosiruptor bescii (strain ATCC BAA-1888 / DSM 6725 / KCTC 15123 / Z-1320) (Anaerocellum thermophilum) protein is tRNA dimethylallyltransferase.